The chain runs to 344 residues: Dihydroorotase (344 aa).

Zn(2+) contacts are provided by His-13 and His-15. Substrate-binding positions include 15 to 17 (HLR) and Asn-41. 3 residues coordinate Zn(2+): Lys-99, His-136, and His-174. Residue Lys-99 is modified to N6-carboxylysine. Substrate is bound at residue His-136. Leu-219 contributes to the substrate binding site. Zn(2+) is bound at residue Asp-247. Residue Asp-247 is part of the active site. His-251 and Ala-263 together coordinate substrate.

This sequence belongs to the metallo-dependent hydrolases superfamily. DHOase family. Class II DHOase subfamily. In terms of assembly, homodimer. The cofactor is Zn(2+).

The enzyme catalyses (S)-dihydroorotate + H2O = N-carbamoyl-L-aspartate + H(+). Its pathway is pyrimidine metabolism; UMP biosynthesis via de novo pathway; (S)-dihydroorotate from bicarbonate: step 3/3. In terms of biological role, catalyzes the reversible cyclization of carbamoyl aspartate to dihydroorotate. The polypeptide is Dihydroorotase (Shewanella denitrificans (strain OS217 / ATCC BAA-1090 / DSM 15013)).